The following is a 202-amino-acid chain: Hypoxanthine-guanine phosphoribosyltransferase (202 aa).

Lys66 and Gly67 together coordinate diphosphate. 2 residues coordinate Mg(2+): Glu122 and Asp123. Residue Asp126 is the Proton acceptor of the active site. Residues Lys154, 175–176, and Asp182 each bind GMP; that span reads FV. Position 188 (Arg188) interacts with diphosphate.

It belongs to the purine/pyrimidine phosphoribosyltransferase family. Mg(2+) serves as cofactor.

It is found in the cytoplasm. It carries out the reaction IMP + diphosphate = hypoxanthine + 5-phospho-alpha-D-ribose 1-diphosphate. The catalysed reaction is GMP + diphosphate = guanine + 5-phospho-alpha-D-ribose 1-diphosphate. The protein operates within purine metabolism; IMP biosynthesis via salvage pathway; IMP from hypoxanthine: step 1/1. It functions in the pathway purine metabolism; GMP biosynthesis via salvage pathway; GMP from guanine: step 1/1. In terms of biological role, purine salvage pathway enzyme that catalyzes the transfer of the ribosyl-5-phosphate group from 5-phospho-alpha-D-ribose 1-diphosphate (PRPP) to the N9 position of the 6-oxopurines hypoxanthine and guanine to form the corresponding ribonucleotides IMP (inosine 5'-monophosphate) and GMP (guanosine 5'-monophosphate), with the release of PPi. The polypeptide is Hypoxanthine-guanine phosphoribosyltransferase (hpt) (Mycobacterium tuberculosis (strain CDC 1551 / Oshkosh)).